The following is a 222-amino-acid chain: uncharacterized protein (222 aa).

Residues 8-77 (AKKNQIIYRY…NTPGYFVCKD (70 aa)) enclose the HTH gntR-type domain.

This is an uncharacterized protein from Mycoplasma genitalium (strain ATCC 33530 / DSM 19775 / NCTC 10195 / G37) (Mycoplasmoides genitalium).